A 913-amino-acid chain; its full sequence is Epithelial discoidin domain-containing receptor 1 (913 aa).

The first 18 residues, 1–18 (MGPEALSSLLLLLLVASG), serve as a signal peptide directing secretion. The Extracellular segment spans residues 21–417 (DMKGHFDPAK…VAKAEGSPTA (397 aa)). In terms of domain architecture, F5/8 type C spans 31 to 185 (CRYALGMQDR…VCLRVELYGC (155 aa)). 2 disulfides stabilise this stretch: Cys31–Cys185 and Cys74–Cys177. The segment at 192 to 367 (LSYTAPVGQT…LFSEISFISD (176 aa)) is DS-like domain. Residues Asn211, Gln230, Asp233, Val235, Tyr253, and Tyr255 each coordinate Ca(2+). N-linked (GlcNAc...) asparagine glycosylation occurs at Asn211. Asn260 is a glycosylation site (N-linked (GlcNAc...) asparagine). Cysteines 303 and 348 form a disulfide. Residues Ser360 and Glu361 each contribute to the Ca(2+) site. 2 N-linked (GlcNAc...) asparagine glycosylation sites follow: Asn370 and Asn394. The helical transmembrane segment at 418–438 (ILIGCLVAIILLLLLIIALML) threads the bilayer. The Cytoplasmic portion of the chain corresponds to 439–913 (WRLHWRRLLS…FLAEDALNTV (475 aa)). A disordered region spans residues 470 to 499 (ILINNRPGPREPPPYQEPRPRGNPPHSAPC). Over residues 479–496 (REPPPYQEPRPRGNPPHS) the composition is skewed to pro residues. Residues 481-484 (PPPY) carry the PPxY motif motif. Tyr484, Tyr513, and Tyr520 each carry phosphotyrosine; by autocatalysis. The Protein kinase domain maps to 610–905 (LRFKEKLGEG…PPFSQLHRFL (296 aa)). 616-624 (LGEGQFGEV) serves as a coordination point for ATP. Ser631 is modified (phosphoserine). Lys655 serves as a coordination point for ATP. Phosphotyrosine; by autocatalysis is present on Tyr740. Asp766 (proton acceptor) is an active-site residue. Phosphotyrosine; by autocatalysis occurs at positions 792, 796, and 797.

The protein belongs to the protein kinase superfamily. Tyr protein kinase family. Insulin receptor subfamily. As to quaternary structure, homodimer. Interacts (via PPxY motif) with WWC1 (via WW domains) in a collagen-regulated manner. Forms a tripartite complex with WWC1 and PRKCZ, but predominantly in the absence of collagen. Interacts (tyrosine phosphorylated) with SHC1. Interacts with SRC. Interacts with MYH9. Interacts with CDH1. Interacts with PTPN11. Interacts with NCK2. Post-translationally, autophosphorylated in response to fibrillar collagen binding. In terms of processing, glycosylation of Asn-211, but apparently not of Asn-260 or Asn-394, prevents autophosphorylation from occurring in the absence of collagen. Detected in T-47D, MDA-MB-175 and HBL-100 breast carcinoma cells, A-431 epidermoid carcinoma cells, SW48 and SNU-C2B colon carcinoma cells and Hs 294T melanoma cells (at protein level). Expressed at low levels in most adult tissues and is highest in the brain, lung, placenta and kidney. Lower levels of expression are detected in melanocytes, heart, liver, skeletal muscle and pancreas. Abundant in breast carcinoma cell lines. In the colonic mucosa, expressed in epithelia but not in the connective tissue of the lamina propria. In the thyroid gland, expressed in the epithelium of the thyroid follicles. In pancreas, expressed in the islets of Langerhans cells, but not in the surrounding epithelial cells of the exocrine pancreas. In kidney, expressed in the epithelia of the distal tubules. Not expressed in connective tissue, endothelial cells, adipose tissue, muscle cells or cells of hematopoietic origin.

It localises to the cell membrane. The protein resides in the secreted. The enzyme catalyses L-tyrosyl-[protein] + ATP = O-phospho-L-tyrosyl-[protein] + ADP + H(+). Its activity is regulated as follows. Inhibited by the multi-targeted cancer drugs imatinib and ponatinib. Tyrosine kinase that functions as a cell surface receptor for fibrillar collagen and regulates cell attachment to the extracellular matrix, remodeling of the extracellular matrix, cell migration, differentiation, survival and cell proliferation. Collagen binding triggers a signaling pathway that involves SRC and leads to the activation of MAP kinases. Regulates remodeling of the extracellular matrix by up-regulation of the matrix metalloproteinases MMP2, MMP7 and MMP9, and thereby facilitates cell migration and wound healing. Required for normal blastocyst implantation during pregnancy, for normal mammary gland differentiation and normal lactation. Required for normal ear morphology and normal hearing. Promotes smooth muscle cell migration, and thereby contributes to arterial wound healing. Also plays a role in tumor cell invasion. Phosphorylates PTPN11. This chain is Epithelial discoidin domain-containing receptor 1 (DDR1), found in Homo sapiens (Human).